We begin with the raw amino-acid sequence, 123 residues long: Large ribosomal subunit protein bL19 (123 aa).

This sequence belongs to the bacterial ribosomal protein bL19 family.

Its function is as follows. This protein is located at the 30S-50S ribosomal subunit interface and may play a role in the structure and function of the aminoacyl-tRNA binding site. The polypeptide is Large ribosomal subunit protein bL19 (Thermomicrobium roseum (strain ATCC 27502 / DSM 5159 / P-2)).